A 464-amino-acid polypeptide reads, in one-letter code: UDP-N-acetylmuramate--L-alanine ligase (464 aa).

Position 111–117 (111–117 (GAHGKTT)) interacts with ATP.

The protein belongs to the MurCDEF family.

It localises to the cytoplasm. The enzyme catalyses UDP-N-acetyl-alpha-D-muramate + L-alanine + ATP = UDP-N-acetyl-alpha-D-muramoyl-L-alanine + ADP + phosphate + H(+). It functions in the pathway cell wall biogenesis; peptidoglycan biosynthesis. Functionally, cell wall formation. This is UDP-N-acetylmuramate--L-alanine ligase from Dictyoglomus turgidum (strain DSM 6724 / Z-1310).